The chain runs to 141 residues: Nucleoside triphosphatase NudI (141 aa).

The 141-residue stretch at 1-141 (MRQRTIVCPL…RKTLRLKGLL (141 aa)) folds into the Nudix hydrolase domain. The short motif at 38–59 (GGVEPGERIEEALRREIREELG) is the Nudix box element.

Belongs to the Nudix hydrolase family. NudI subfamily. Monomer. Requires Mg(2+) as cofactor.

It catalyses the reaction a ribonucleoside 5'-triphosphate + H2O = a ribonucleoside 5'-phosphate + diphosphate + H(+). The enzyme catalyses a 2'-deoxyribonucleoside 5'-triphosphate + H2O = a 2'-deoxyribonucleoside 5'-phosphate + diphosphate + H(+). The catalysed reaction is dUTP + H2O = dUMP + diphosphate + H(+). It carries out the reaction dTTP + H2O = dTMP + diphosphate + H(+). It catalyses the reaction dCTP + H2O = dCMP + diphosphate + H(+). Its function is as follows. Catalyzes the hydrolysis of nucleoside triphosphates, with a preference for pyrimidine deoxynucleoside triphosphates (dUTP, dTTP and dCTP). This chain is Nucleoside triphosphatase NudI, found in Escherichia coli (strain ATCC 8739 / DSM 1576 / NBRC 3972 / NCIMB 8545 / WDCM 00012 / Crooks).